The primary structure comprises 122 residues: Histone H2B (122 aa).

The interval Met-1 to Lys-31 is disordered. At Pro-2 the chain carries N,N-dimethylproline. Gln-10 participates in a covalent cross-link: Isoglutamyl lysine isopeptide (Gln-Lys) (interchain with K-5 in histone H4). An O-linked (GlcNAc) serine glycan is attached at Ser-109. Lys-117 is covalently cross-linked (Glycyl lysine isopeptide (Lys-Gly) (interchain with G-Cter in ubiquitin)).

The protein belongs to the histone H2B family. In terms of assembly, the nucleosome is a histone octamer containing two molecules each of H2A, H2B, H3 and H4 assembled in one H3-H4 heterotetramer and two H2A-H2B heterodimers. The octamer wraps approximately 147 bp of DNA. In terms of processing, monoubiquitination of Lys-117 gives a specific tag for epigenetic transcriptional activation and is also prerequisite for histone H3 'Lys-4' and 'Lys-79' methylation. Post-translationally, glcNAcylation at Ser-109 promotes monoubiquitination of Lys-117. It fluctuates in response to extracellular glucose, and associates with transcribed genes.

The protein resides in the nucleus. Its subcellular location is the chromosome. Its function is as follows. Core component of nucleosome. Nucleosomes wrap and compact DNA into chromatin, limiting DNA accessibility to the cellular machineries which require DNA as a template. Histones thereby play a central role in transcription regulation, DNA repair, DNA replication and chromosomal stability. DNA accessibility is regulated via a complex set of post-translational modifications of histones, also called histone code, and nucleosome remodeling. This is Histone H2B from Patiria pectinifera (Starfish).